The chain runs to 494 residues: Cysteine--tRNA ligase (494 aa).

Residue Cys-29 participates in Zn(2+) binding. Residues 31-41 (VTVYDHCHIGH) carry the 'HIGH' region motif. Zn(2+) is bound by residues Cys-209, His-234, and Glu-238. The 'KMSKS' region motif lies at 266 to 270 (KMSKS). Residue Lys-269 coordinates ATP.

Belongs to the class-I aminoacyl-tRNA synthetase family. Monomer. It depends on Zn(2+) as a cofactor.

It is found in the cytoplasm. The enzyme catalyses tRNA(Cys) + L-cysteine + ATP = L-cysteinyl-tRNA(Cys) + AMP + diphosphate. The sequence is that of Cysteine--tRNA ligase from Geotalea daltonii (strain DSM 22248 / JCM 15807 / FRC-32) (Geobacter daltonii).